Reading from the N-terminus, the 397-residue chain is Alpha-lytic protease (397 aa).

An N-terminal signal peptide occupies residues 1 to 24; the sequence is MYVSNHRSRRVARVSVSCLVAALA. The propeptide occupies 25–199; the sequence is AMSCGAALAA…ESSPGKLQTT (175 aa). A disulfide bridge connects residues C216 and C236. Catalysis depends on charge relay system residues H235 and D262. 2 disulfide bridges follow: C300/C310 and C336/C369. Catalysis depends on S342, which acts as the Charge relay system.

This sequence belongs to the peptidase S1 family.

The enzyme catalyses Preferential cleavage: Ala-|-Xaa, Val-|-Xaa in bacterial cell walls, elastin and other proteins.. This is Alpha-lytic protease (alpha-LP) from Lysobacter enzymogenes.